The following is a 418-amino-acid chain: Putative ion-transport protein YfeO (418 aa).

12 helical membrane-spanning segments follow: residues 10 to 30 (LLLS…LIVV), 54 to 74 (DSPF…GLVI), 99 to 119 (ALLG…SLGP), 120 to 140 (EHPI…RLLP), 149 to 169 (ILAS…AALI), 186 to 206 (LFAP…FFHP), 223 to 243 (ILSG…AVWC), 258 to 278 (VLVL…GGPV), 300 to 320 (DYFL…ASGF), 322 to 342 (GGRI…LHEH), 343 to 363 (VPAV…VLVV), and 371 to 391 (LFMA…CIVM).

The protein belongs to the chloride channel (TC 2.A.49) family.

Its subcellular location is the cell membrane. This is Putative ion-transport protein YfeO from Escherichia coli O17:K52:H18 (strain UMN026 / ExPEC).